Consider the following 166-residue polypeptide: Ribosome maturation factor RimP (166 aa).

It belongs to the RimP family.

The protein localises to the cytoplasm. Functionally, required for maturation of 30S ribosomal subunits. This Psychrobacter sp. (strain PRwf-1) protein is Ribosome maturation factor RimP.